Consider the following 250-residue polypeptide: Lymphocyte function-associated antigen 3 (250 aa).

The signal sequence occupies residues 1-28; that stretch reads MVAGSDAGRALGVLSVVCLLHCFGFISC. At 29 to 215 the chain is on the extracellular side; sequence FSQQIYGVVY…IPSSGHSRHR (187 aa). The Ig-like domain occupies 30 to 121; it reads SQQIYGVVYG…DTMKFFLYVL (92 aa). 6 N-linked (GlcNAc...) asparagine glycosylation sites follow: Asn40, Asn94, Asn109, Asn135, Asn169, and Asn195. Cys142 and Cys187 are disulfide-bonded. A helical membrane pass occupies residues 216–238; the sequence is YALIPIPLAVITTCIVLYMNGIL. The Cytoplasmic portion of the chain corresponds to 239 to 250; it reads KCDRKPDRTNSN.

Interacts with CD2. Interacts with CMTM6. As to quaternary structure, (Microbial infection) Interacts with human cytomegalovirus protein UL148; this interaction retains immature CD58 intracellularly.

It localises to the cell membrane. Its function is as follows. Ligand of the T-lymphocyte CD2 glycoprotein. This interaction is important in mediating thymocyte interactions with thymic epithelial cells, antigen-independent and -dependent interactions of T-lymphocytes with target cells and antigen-presenting cells and the T-lymphocyte rosetting with erythrocytes. In addition, the LFA-3/CD2 interaction may prime response by both the CD2+ and LFA-3+ cells. The sequence is that of Lymphocyte function-associated antigen 3 (CD58) from Homo sapiens (Human).